Reading from the N-terminus, the 2102-residue chain is Mediator of RNA polymerase II transcription subunit 13-like (2102 aa).

6 disordered regions span residues 304 to 335, 432 to 487, 514 to 587, 689 to 758, 776 to 819, and 947 to 1034; these read SYAG…EEAQ, QRAC…QPSL, VTSS…LDPL, SSAV…TTSL, NSDE…DLHQ, and SVVE…SSVE. A compositionally biased stretch (pro residues) spans 439-450; the sequence is GHPPSAGQPPQP. A compositionally biased stretch (basic and acidic residues) spans 455–467; the sequence is KMAEKLEKGDKQQ. Positions 693 to 714 are enriched in acidic residues; sequence CDEDPEQESDPYAFEEGDEEFN. Composition is skewed to basic and acidic residues over residues 715 to 737 and 794 to 804; these read FSDK…REDG and AEEKFGGKEPK. Residues 947-974 are compositionally biased toward polar residues; it reads SVVEQEQSCTPQTHNTFMSNSAPPSNSG. Over residues 979–990 the composition is skewed to low complexity; that stretch reads PSPATPRISAPT. Positions 1015 to 1029 are enriched in polar residues; that stretch reads SDLNSPASTPSTCRP. 2 consecutive short sequence motifs (LXXLL motif) follow at residues 1165-1169 and 1254-1258; these read LMLLL and LRMLL. 2 disordered regions span residues 1451–1574 and 1948–1983; these read LTQR…DGDS and NSPT…HDES. Composition is skewed to low complexity over residues 1458 to 1467, 1476 to 1502, and 1522 to 1538; these read SSSQTSSSSS, TPTT…SSSS, and GAQG…QSAG. The segment covering 1542 to 1552 has biased composition (polar residues); it reads DATSATSQPQV. Over residues 1973–1983 the composition is skewed to basic and acidic residues; sequence GTDRMESHDES.

This sequence belongs to the Mediator complex subunit 13 family. Component of the Mediator complex.

It is found in the nucleus. In terms of biological role, component of the Mediator complex, a coactivator involved in regulated gene transcription of nearly all RNA polymerase II-dependent genes. Mediator functions as a bridge to convey information from gene-specific regulatory proteins to the basal RNA polymerase II transcription machinery. Mediator is recruited to promoters by direct interactions with regulatory proteins and serves as a scaffold for the assembly of a functional preinitiation complex with RNA polymerase II and the general transcription factors. The chain is Mediator of RNA polymerase II transcription subunit 13-like from Danio rerio (Zebrafish).